The chain runs to 367 residues: Probable trehalose-phosphate phosphatase 4 (367 aa).

The protein belongs to the trehalose phosphatase family. It depends on a divalent metal cation as a cofactor.

The catalysed reaction is alpha,alpha-trehalose 6-phosphate + H2O = alpha,alpha-trehalose + phosphate. The protein operates within glycan biosynthesis; trehalose biosynthesis. Its function is as follows. Removes the phosphate from trehalose 6-phosphate to produce free trehalose. Trehalose accumulation in plant may improve abiotic stress tolerance. The sequence is that of Probable trehalose-phosphate phosphatase 4 (TPP4) from Oryza sativa subsp. japonica (Rice).